We begin with the raw amino-acid sequence, 617 residues long: Protein fem-1 homolog C (617 aa).

Methionine 1 is subject to N-acetylmethionine. 7 ANK repeats span residues 2–31 (DLKTAVFNAARDGKLRLLTKLLASKSKAEV), 40–70 (NGATPLLMAARYGHLDMVEFLLEQCSASIEV), 82–111 (EGAPPLWAASAAGHLKVVQSLLNHGASVNN), 115–144 (TNSTPLRAACFDGHLEIVKYLVEHKADLEV), 148–177 (HGHTCLMISCYKGHKEIAQYLLEKGADVNR), 181–210 (KGNTALHDCAESGSLDIMKMLLMYCAKMEK), and 213–242 (YGMTPLLSASVTGHTNIVDFLTHHAQTSKT). 2 TPR repeats span residues 245 to 279 (INALELLGATFVDKKRDLLGALKYWKKAMNMRYSD) and 338 to 371 (SYYIRYRGAVYADSGNFKRCINLWKYALDMQQSN). ANK repeat units follow at residues 481–523 (NNFS…DVNV) and 527–556 (DDNSPLHIAALNNHPDIMNLLIKSGAHFDA).

It belongs to the fem-1 family. As to quaternary structure, component of a Cul2-RING (CRL2) E3 ubiquitin-protein ligase complex, also named ECS (Elongin BC-CUL2/5-SOCS-box protein) complex, composed of CUL2, Elongin BC (ELOB and ELOC), RBX1 and substrate-specific adapter FEM1C. As to expression, widely expressed. Expressed at higher level in testis.

It functions in the pathway protein modification; protein ubiquitination. In terms of biological role, substrate-recognition component of a Cul2-RING (CRL2) E3 ubiquitin-protein ligase complex of the DesCEND (destruction via C-end degrons) pathway, which recognizes a C-degron located at the extreme C terminus of target proteins, leading to their ubiquitination and degradation. The C-degron recognized by the DesCEND pathway is usually a motif of less than ten residues and can be present in full-length proteins, truncated proteins or proteolytically cleaved forms. The CRL2(FEM1C) complex specifically recognizes proteins with an arginine at the C-terminus: recognizes and binds proteins ending with -Lys/Arg-Xaa-Arg and -Lys/Arg-Xaa-Xaa-Arg C-degrons, such as SIL1 or OR51B2, leading to their ubiquitination and degradation. The CRL2(FEM1C) complex mediates ubiquitination and degradation of truncated MSRB1/SEPX1 selenoproteins produced by failed UGA/Sec decoding. Promotes ubiquitination and degradation of SLBP. The polypeptide is Protein fem-1 homolog C (Mus musculus (Mouse)).